Here is a 537-residue protein sequence, read N- to C-terminus: Chaperonin GroEL 1 (537 aa).

ATP contacts are provided by residues 29–32, 86–90, Gly-413, 478–480, and Asp-494; these read TLGP, DGTTT, and NAA.

Belongs to the chaperonin (HSP60) family. As to quaternary structure, forms a cylinder of 14 subunits composed of two heptameric rings stacked back-to-back. Interacts with the co-chaperonin GroES.

Its subcellular location is the cytoplasm. It carries out the reaction ATP + H2O + a folded polypeptide = ADP + phosphate + an unfolded polypeptide.. Together with its co-chaperonin GroES, plays an essential role in assisting protein folding. The GroEL-GroES system forms a nano-cage that allows encapsulation of the non-native substrate proteins and provides a physical environment optimized to promote and accelerate protein folding. This Corynebacterium efficiens (strain DSM 44549 / YS-314 / AJ 12310 / JCM 11189 / NBRC 100395) protein is Chaperonin GroEL 1.